The following is a 267-amino-acid chain: Glutamate racemase (267 aa).

Substrate contacts are provided by residues 10-11 and 42-43; these read DS and YG. The active-site Proton donor/acceptor is the Cys-73. Residue 74–75 participates in substrate binding; that stretch reads NT. Cys-183 functions as the Proton donor/acceptor in the catalytic mechanism. 184-185 lines the substrate pocket; the sequence is TH.

This sequence belongs to the aspartate/glutamate racemases family.

It carries out the reaction L-glutamate = D-glutamate. The protein operates within cell wall biogenesis; peptidoglycan biosynthesis. Provides the (R)-glutamate required for cell wall biosynthesis. In Limosilactobacillus reuteri (strain DSM 20016) (Lactobacillus reuteri), this protein is Glutamate racemase.